The chain runs to 61 residues: Probable tautomerase lin2709 (61 aa).

The active-site Proton acceptor; via imino nitrogen is Pro2.

This sequence belongs to the 4-oxalocrotonate tautomerase family.

This is Probable tautomerase lin2709 from Listeria innocua serovar 6a (strain ATCC BAA-680 / CLIP 11262).